The sequence spans 493 residues: Trans-aconitate decarboxylase 1 (493 aa).

The interval 1 to 22 (MAPALNANPTTKRDELSAPSAS) is disordered.

This sequence belongs to the class-II fumarase/aspartase family.

Its subcellular location is the cytoplasm. It is found in the cytosol. It localises to the nucleus. The catalysed reaction is trans-aconitate + H(+) = itaconate + CO2. The protein operates within secondary metabolite biosynthesis. Trans-aconitate decarboxylase; part of the gene cluster that mediates the biosynthesis of itaconic acid and 2-hydroxyparaconate. Cis-aconitate is secreted by the mitochondrial tricarboxylate transporter MTT1. In the cytosol cis-aconitate is converted into trans-aconitate via isomerization by the aconitate-delta-isomerase ADI1. Decarboxylation of trans-aconitate by the trans-aconitate decarboxylase TAD1 then leads then to the production of itaconic acid. The cytochrome P450 monooxygenase CYP3 further converts itaconate to 2-hydroxyparaconate via oxidation of the double bond, leading to a transient epoxide, which can subsequently be lactonized to produce 2-hydroxyparaconate. Secretion of itaconate and possibly 2-hydroxyparaconate into the medium is mediated by the major facilitator ITP1. The glyoxalase domain-containing protein RDO1 is not involved in the biosynthesis of itaconate and 2-hydroxyparaconate, however, it might play a role in the further conversion of 2-hydroxyparaconate to itatartarate. In Mycosarcoma maydis (Corn smut fungus), this protein is Trans-aconitate decarboxylase 1.